We begin with the raw amino-acid sequence, 367 residues long: 5-amino-6-(D-ribitylamino)uracil--L-tyrosine 4-hydroxyphenyl transferase (367 aa).

The Radical SAM core domain occupies 54-288 (ITYIENWNIN…VYAISRLMFR (235 aa)). Residues C68, C72, and C75 each coordinate [4Fe-4S] cluster.

This sequence belongs to the radical SAM superfamily. CofH family. As to quaternary structure, consists of two subunits, CofG and CofH. Requires [4Fe-4S] cluster as cofactor.

The enzyme catalyses 5-amino-6-(D-ribitylamino)uracil + L-tyrosine + S-adenosyl-L-methionine = 5-amino-5-(4-hydroxybenzyl)-6-(D-ribitylimino)-5,6-dihydrouracil + 2-iminoacetate + 5'-deoxyadenosine + L-methionine + H(+). The protein operates within cofactor biosynthesis; coenzyme F0 biosynthesis. Catalyzes the radical-mediated synthesis of 5-amino-5-(4-hydroxybenzyl)-6-(D-ribitylimino)-5,6-dihydrouracil from 5-amino-6-(D-ribitylamino)uracil and L-tyrosine. The sequence is that of 5-amino-6-(D-ribitylamino)uracil--L-tyrosine 4-hydroxyphenyl transferase from Methanothermobacter thermautotrophicus (strain ATCC 29096 / DSM 1053 / JCM 10044 / NBRC 100330 / Delta H) (Methanobacterium thermoautotrophicum).